The following is a 186-amino-acid chain: MRVILIVPIGYIPEWLIKDVAEFVDSYYSRRGVSVKAGDSLSESLFLSAYHPFRRQFLGGAFLPTLSEIGRRAGALATVGITKVDLYEKGMNFVFGVASEKLRSAVVSIHRLRPEFYGRPSNDELLIERTVKEVMHELGHVFGLSHCPNVRCVMHFSNSVDDTDIKLPYYCPNCERKLLRNLEVVL.

H136 is a binding site for Zn(2+). The active-site Proton acceptor is the E137. Zn(2+) is bound by residues H140, H146, C147, C152, C171, and C174.

This sequence belongs to the peptidase M54 family. As to quaternary structure, monomer. Requires Zn(2+) as cofactor.

Probable zinc metalloprotease whose natural substrate is unknown. The polypeptide is Archaemetzincin (Thermococcus kodakarensis (strain ATCC BAA-918 / JCM 12380 / KOD1) (Pyrococcus kodakaraensis (strain KOD1))).